A 142-amino-acid polypeptide reads, in one-letter code: Transcriptional regulator MraZ (142 aa).

SpoVT-AbrB domains lie at 5-51 (ASSL…PRPV) and 77-120 (ASDV…DATK).

This sequence belongs to the MraZ family. In terms of assembly, forms oligomers.

The protein localises to the cytoplasm. The protein resides in the nucleoid. The protein is Transcriptional regulator MraZ of Janthinobacterium sp. (strain Marseille) (Minibacterium massiliensis).